The sequence spans 492 residues: GTPase Der (492 aa).

In terms of domain architecture, EngA-type G 1 spans 3–166; sequence PVIALVGRPN…AVLGIFPKDA (164 aa). Residues 9-16, 56-60, and 118-121 contribute to the GTP site; these read GRPNVGKS, DTGGI, and NKVD. Residues 166–190 form a disordered region; that stretch reads AGEPEEGAEAEEEVQEGQEAKRIPG. Residues 168 to 181 show a composition bias toward acidic residues; the sequence is EPEEGAEAEEEVQE. An EngA-type G 2 domain is found at 197-370; that stretch reads IKLAIIGRPN…SVQAAFHSAV (174 aa). Residues 203-210, 250-254, and 315-318 contribute to the GTP site; these read GRPNVGKS, DTAGV, and NKWD. The 85-residue stretch at 371–455 folds into the KH-like domain; it reads TRWPTSRLTQ…PIRIEYKGGE (85 aa). A disordered region spans residues 453–492; sequence GGENPYEGNKNKLTDRQVNKKRRLMSHHKKAEKKRKDKRK. A compositionally biased stretch (basic and acidic residues) spans 461-470; it reads NKNKLTDRQV. The segment covering 471–492 has biased composition (basic residues); sequence NKKRRLMSHHKKAEKKRKDKRK.

The protein belongs to the TRAFAC class TrmE-Era-EngA-EngB-Septin-like GTPase superfamily. EngA (Der) GTPase family. In terms of assembly, associates with the 50S ribosomal subunit.

Functionally, GTPase that plays an essential role in the late steps of ribosome biogenesis. The polypeptide is GTPase Der (Ectopseudomonas mendocina (strain ymp) (Pseudomonas mendocina)).